A 446-amino-acid chain; its full sequence is Regulator of drug sensitivity 2 (446 aa).

The segment at residues 15–45 is a DNA-binding region (zn(2)-C6 fungal-type); the sequence is KTCLFCKRSHVVCDKQRPCSRCVKRDIAHLC. 2 disordered regions span residues 52 to 106 and 158 to 218; these read VPNE…PKLD and ASNV…KEES. 2 stretches are compositionally biased toward polar residues: residues 56 to 70 and 84 to 96; these read MPSQ…NNIQ and DYQN…SGST. Phosphoserine is present on Ser102. Positions 160–177 are enriched in polar residues; the sequence is NVHLENGSQTTQSPLEYQ. Basic and acidic residues predominate over residues 178-192; the sequence is NDNRRDEIGVARQEN. The segment covering 193-206 has biased composition (polar residues); that stretch reads RSPTIMSGSSNSIS. The segment covering 207-218 has biased composition (basic and acidic residues); it reads KGDKQDQEKEES. Position 231 is a phosphothreonine (Thr231).

Phosphorylated by SNF1 in absence of glucose. The phosphorylation is required for induction of transcription of gluconeogenic genes.

Its subcellular location is the cytoplasm. It localises to the nucleus. Its function is as follows. Transcription factor which regulates the expression of genes for gluconeogenesis, the TCA cycle, and glucose metabolism. Involved in the cell wall remodeling process and drug resistance. The sequence is that of Regulator of drug sensitivity 2 (RDS2) from Saccharomyces cerevisiae (strain ATCC 204508 / S288c) (Baker's yeast).